The chain runs to 171 residues: MNKANSFNKEELIACGHGNLFGPNSPRLPVDNMLMIDRIITINDNGGEFGKGEIVAELDINPDLWFFGCHFISDPVMPGCLGLDAMWQLVGFYLGWEGAEGKGRALGVGEVKFTGQVLPGAKKVTYKLNIKRTIHRKLVMGIADAILEVDGRQIYSATDLKVGVFSDTSTF.

Residue His70 is part of the active site.

Belongs to the thioester dehydratase family. FabA subfamily. As to quaternary structure, homodimer.

The protein resides in the cytoplasm. It carries out the reaction a (3R)-hydroxyacyl-[ACP] = a (2E)-enoyl-[ACP] + H2O. The enzyme catalyses (3R)-hydroxydecanoyl-[ACP] = (2E)-decenoyl-[ACP] + H2O. The catalysed reaction is (2E)-decenoyl-[ACP] = (3Z)-decenoyl-[ACP]. It functions in the pathway lipid metabolism; fatty acid biosynthesis. Necessary for the introduction of cis unsaturation into fatty acids. Catalyzes the dehydration of (3R)-3-hydroxydecanoyl-ACP to E-(2)-decenoyl-ACP and then its isomerization to Z-(3)-decenoyl-ACP. Can catalyze the dehydratase reaction for beta-hydroxyacyl-ACPs with saturated chain lengths up to 16:0, being most active on intermediate chain length. The protein is 3-hydroxydecanoyl-[acyl-carrier-protein] dehydratase of Shewanella sp. (strain ANA-3).